We begin with the raw amino-acid sequence, 349 residues long: MSKKKLSKGQQRRVSANHQRRLKKTESKVEWEDSQLGDAQEGIIISRFGMHADVEATDGVVHRCNIRRTLSSLVTGDRVVWRPGHESLAGISGIVEAVHPRHSVLTRPDYYDGIKPIAANIDQIVIVSAILPELSLNIIDRYLVACETLEIEPLIVLNKIDLLDDESRQFVDKLMDIYRALNYRVLMVSSHTQQGIPELEQALTDRISIFAGQSGVGKSSLLNALLALDEERILVNEVSDNSGLGQHTTTASRLYHFPHGGDVIDSPGVREFGLWHLEPEQVTRGFIELRQYIGSCKFRDCKHENDPGCAINAALDRGEIAVERYDNYHRILESMAQVKTRKGFSDTDN.

The span at 1 to 11 shows a compositional bias: basic residues; it reads MSKKKLSKGQQ. The interval 1–29 is disordered; it reads MSKKKLSKGQQRRVSANHQRRLKKTESKV. Positions 102-272 constitute a CP-type G domain; sequence HSVLTRPDYY…VIDSPGVREF (171 aa). GTP is bound by residues 158-161 and 212-220; these read NKID and GQSGVGKSS. Residues C296, C301, H303, and C309 each coordinate Zn(2+).

Belongs to the TRAFAC class YlqF/YawG GTPase family. RsgA subfamily. In terms of assembly, monomer. Associates with 30S ribosomal subunit, binds 16S rRNA. The cofactor is Zn(2+).

It localises to the cytoplasm. One of several proteins that assist in the late maturation steps of the functional core of the 30S ribosomal subunit. Helps release RbfA from mature subunits. May play a role in the assembly of ribosomal proteins into the subunit. Circularly permuted GTPase that catalyzes slow GTP hydrolysis, GTPase activity is stimulated by the 30S ribosomal subunit. This Pectobacterium carotovorum subsp. carotovorum (strain PC1) protein is Small ribosomal subunit biogenesis GTPase RsgA.